The chain runs to 758 residues: CRISPR system single-strand-specific deoxyribonuclease Cas10/Csm1 (subtype III-A) (758 aa).

Positions M1 to G82 are HD domain. The GGDEF domain maps to K509–S647.

This sequence belongs to the CRISPR-associated Cas10/Csm1 family. In terms of assembly, part of the Csm effector complex that includes at least Cas10(1), Csm2(3), Csm3(5), Csm4(1), Csm5(1) and mature crRNA. The Csm complex is elongated and slightly twisted with a maximal length of 215 Angstroms and a diameter of 75-80 Angstroms. It has been modeled to have a central protein filamant of Csm3 subunits along which the dsRNA helix of paired crRNA and target RNA binds. The filament is capped at one end by Cas10 and Csm4 and at the other end by Csm5; ssDNA is thought to bind to the N-terminal HD domain of Cas10. Csm with a precursor crRNA does not include Csm5, while Cas6, the enzyme probably involved in pre-crRNA processing, is found associated with a subset of the Csm complex. A divalent metal cation is required as a cofactor.

The catalysed reaction is 6 ATP = cyclic hexaadenylate + 6 diphosphate. SsDNase activity is activated by target RNA binding to the Csm-crRNA complex and is inhibited by EDTA. Its function is as follows. CRISPR (clustered regularly interspaced short palindromic repeat) is an adaptive immune system that provides protection against mobile genetic elements (viruses, transposable elements and conjugative plasmids). CRISPR clusters contain spacers, sequences complementary to antecedent mobile elements, and target invading nucleic acids. CRISPR clusters are transcribed and processed into CRISPR RNA (crRNA). The type III-A Csm effector complex binds crRNA and acts as a crRNA-guided RNase, DNase and cyclic oligoadenylate synthase; binding of target RNA cognate to the crRNA is required for all activities. In a heterologous host this Csm effector complex restricts ssRNA phage MS2, suggesting it may target RNA viruses in vivo. Csm functions as a non-specific ssDNase. Base-pairing between crRNA and target RNA to form a ternary Csm complex activates a ssDNase activity; target RNA cleavage suppresses the ssDNase, a temporal control that prevents uncontrolled DNA degradation. Viral RNA transcripts probably tether the Csm complex to the viral genome, recruiting Cas10 ssDNA activity which is able to degrade DNA in the transcription bubble, spatially controlling the DNase activity. In terms of biological role, this subunit has a weak ssDNase activity that is dramatically activated by the ternary Csm effector complex (the crRNA, Cas proteins and a cognate target ssRNA). Target RNA and ssDNA are cleaved simultaneously, although RNase activity (of Csm3) is much faster. RNA cleavage by Csm3 is not required for ssDNase activity as Csm complex with inactive Csm3 still has ssDNase activity; however as the cleaved target RNA products dissociate away ssDNase activity decreases. Self-recognition, with subsequent repression of the ssDNase activity, occurs when the 5' handle of the crRNA bases pairs with the 3' flanking sequence of the target RNA (which would occur if the CRISPR locus were transcribed as an anti-pre-crRNA). This protein has low activity on dsDNA which is not stimulated by the Csm complex. Functionally, this subunit is a single-strand-specific deoxyribonuclease (ssDNase) which digests both linear and circular ssDNA; it has both exo- and endonuclease activity. Its function is as follows. When associated with the ternary Csm effector complex (the crRNA, Cas proteins and a cognate target ssRNA) synthesizes cyclic oligoadenylates (cOA) from ATP, producing cyclic triadenylate (cA3) up to cyclic hexaadenylate (cA6), which is the active cOA. The enzyme is also able to cyclize pppA3 up to pppA6. cOAs are second messengers that induce an antiviral state important for defense against invading nucleic acids. Synthesis of cOA can occur with AMP plus ATP, 2'dATP or 3'dATP (but no other nucleotides), and requires a free 3'-OH ribose moiety. The protein is CRISPR system single-strand-specific deoxyribonuclease Cas10/Csm1 (subtype III-A) of Streptococcus thermophilus.